A 221-amino-acid chain; its full sequence is Succinate--CoA ligase [ADP-forming] subunit beta, mitochondrial (221 aa).

The region spanning 1–122 is the ATP-grasp domain; it reads DVVIKAQVLA…DSNSAYRQKI (122 aa). Lys-5 lines the ATP pocket. N6-acetyllysine occurs at positions 22 and 26. At Ser-114 the chain carries Phosphoserine. Thr-139 carries the phosphothreonine modification. A substrate-binding site is contributed by 171–173; it reads GIM. Lys-196 carries the post-translational modification N6-acetyllysine.

This sequence belongs to the succinate/malate CoA ligase beta subunit family. ATP-specific subunit beta subfamily. In terms of assembly, heterodimer of an alpha and a beta subunit. The beta subunit determines specificity for ATP. Interacts with ALAS2.

It is found in the mitochondrion. The catalysed reaction is succinate + ATP + CoA = succinyl-CoA + ADP + phosphate. It functions in the pathway carbohydrate metabolism; tricarboxylic acid cycle; succinate from succinyl-CoA (ligase route): step 1/1. Functionally, ATP-specific succinyl-CoA synthetase functions in the citric acid cycle (TCA), coupling the hydrolysis of succinyl-CoA to the synthesis of ATP and thus represents the only step of substrate-level phosphorylation in the TCA. The beta subunit provides nucleotide specificity of the enzyme and binds the substrate succinate, while the binding sites for coenzyme A and phosphate are found in the alpha subunit. The protein is Succinate--CoA ligase [ADP-forming] subunit beta, mitochondrial of Mesocricetus auratus (Golden hamster).